The primary structure comprises 273 residues: 4-hydroxy-tetrahydrodipicolinate reductase (273 aa).

NAD(+)-binding positions include 11–16 (GATGKM) and 106–108 (GTT). The Proton donor/acceptor role is filled by His162. Residue His163 participates in (S)-2,3,4,5-tetrahydrodipicolinate binding. The active-site Proton donor is the Lys166. Residue 172-173 (GT) coordinates (S)-2,3,4,5-tetrahydrodipicolinate.

This sequence belongs to the DapB family.

The protein localises to the cytoplasm. The catalysed reaction is (S)-2,3,4,5-tetrahydrodipicolinate + NAD(+) + H2O = (2S,4S)-4-hydroxy-2,3,4,5-tetrahydrodipicolinate + NADH + H(+). The enzyme catalyses (S)-2,3,4,5-tetrahydrodipicolinate + NADP(+) + H2O = (2S,4S)-4-hydroxy-2,3,4,5-tetrahydrodipicolinate + NADPH + H(+). Its pathway is amino-acid biosynthesis; L-lysine biosynthesis via DAP pathway; (S)-tetrahydrodipicolinate from L-aspartate: step 4/4. In terms of biological role, catalyzes the conversion of 4-hydroxy-tetrahydrodipicolinate (HTPA) to tetrahydrodipicolinate. This Synechococcus sp. (strain ATCC 27144 / PCC 6301 / SAUG 1402/1) (Anacystis nidulans) protein is 4-hydroxy-tetrahydrodipicolinate reductase.